The sequence spans 320 residues: Acetyl-coenzyme A carboxylase carboxyl transferase subunit alpha (320 aa).

The 254-residue stretch at 42 to 295 (IEEKAVQALN…GDAIAAAFAE (254 aa)) folds into the CoA carboxyltransferase C-terminal domain.

Belongs to the AccA family. In terms of assembly, acetyl-CoA carboxylase is a heterohexamer composed of biotin carboxyl carrier protein (AccB), biotin carboxylase (AccC) and two subunits each of ACCase subunit alpha (AccA) and ACCase subunit beta (AccD).

It is found in the cytoplasm. It carries out the reaction N(6)-carboxybiotinyl-L-lysyl-[protein] + acetyl-CoA = N(6)-biotinyl-L-lysyl-[protein] + malonyl-CoA. It functions in the pathway lipid metabolism; malonyl-CoA biosynthesis; malonyl-CoA from acetyl-CoA: step 1/1. Component of the acetyl coenzyme A carboxylase (ACC) complex. First, biotin carboxylase catalyzes the carboxylation of biotin on its carrier protein (BCCP) and then the CO(2) group is transferred by the carboxyltransferase to acetyl-CoA to form malonyl-CoA. In Rhodopseudomonas palustris (strain HaA2), this protein is Acetyl-coenzyme A carboxylase carboxyl transferase subunit alpha.